A 97-amino-acid polypeptide reads, in one-letter code: HssA/B-like protein 27 (97 aa).

Belongs to the hssA/B family.

In Dictyostelium discoideum (Social amoeba), this protein is HssA/B-like protein 27 (hssl27).